The sequence spans 322 residues: MSIMQASCIALVSSLTLTVIFLPLLIKFMHSHHEGQEIRDEGPKWHQKKSGTPTMGGTIFVIAAVISVIWVTAWQHSLNKVVWILVISLLGYGIIGFLDDGIKLYYKRNLGLRAWQKLALQIIIAVVIVLIASSDHFNFGLYIPFAGVVHSVALFVIFIIFWLVGFSNAVNLSDGLDGLATGLSVVAYGTYAYIAFKQKNFAILAFCMSVIGGLIAFFIFNHKPAKIFMGDAGSLALGGGLATVSIMLNRPWSLLLVGIVFVCETASVIMQVISFQTTGKRIFKMTPIHHHFEMLGWSEWKVDIVFWIVGLVGSILYLAIWG.

The next 10 membrane-spanning stretches (helical) occupy residues 6-26, 54-74, 82-102, 122-142, 145-165, 176-196, 200-220, 227-247, 255-275, and 302-322; these read ASCIALVSSLTLTVIFLPLLI, TMGGTIFVIAAVISVIWVTAW, VWILVISLLGYGIIGFLDDGI, IIIAVVIVLIASSDHFNFGLY, FAGVVHSVALFVIFIIFWLVG, LDGLATGLSVVAYGTYAYIAF, NFAILAFCMSVIGGLIAFFIF, IFMGDAGSLALGGGLATVSIM, LLVGIVFVCETASVIMQVISF, and VDIVFWIVGLVGSILYLAIWG.

The protein belongs to the glycosyltransferase 4 family. MraY subfamily. The cofactor is Mg(2+).

It localises to the cell membrane. The catalysed reaction is UDP-N-acetyl-alpha-D-muramoyl-L-alanyl-gamma-D-glutamyl-L-lysyl-D-alanyl-D-alanine + di-trans,octa-cis-undecaprenyl phosphate = Mur2Ac(oyl-L-Ala-gamma-D-Glu-L-Lys-D-Ala-D-Ala)-di-trans,octa-cis-undecaprenyl diphosphate + UMP. It functions in the pathway cell wall biogenesis; peptidoglycan biosynthesis. Catalyzes the initial step of the lipid cycle reactions in the biosynthesis of the cell wall peptidoglycan: transfers peptidoglycan precursor phospho-MurNAc-pentapeptide from UDP-MurNAc-pentapeptide onto the lipid carrier undecaprenyl phosphate, yielding undecaprenyl-pyrophosphoryl-MurNAc-pentapeptide, known as lipid I. This chain is Phospho-N-acetylmuramoyl-pentapeptide-transferase, found in Lactobacillus helveticus (strain DPC 4571).